The following is a 259-amino-acid chain: Global transcriptional regulator CodY (259 aa).

The GAF domain stretch occupies residues 1–155 (MNLLAKTRKL…GATVVGMEIL (155 aa)). The segment at residues 203 to 222 (ASKIADRVGITRSVIVNALR) is a DNA-binding region (H-T-H motif).

It belongs to the CodY family.

It is found in the cytoplasm. DNA-binding global transcriptional regulator which is involved in the adaptive response to starvation and acts by directly or indirectly controlling the expression of numerous genes in response to nutrient availability. During rapid exponential growth, CodY is highly active and represses genes whose products allow adaptation to nutrient depletion. The sequence is that of Global transcriptional regulator CodY from Exiguobacterium sibiricum (strain DSM 17290 / CCUG 55495 / CIP 109462 / JCM 13490 / 255-15).